The sequence spans 501 residues: ADP,ATP carrier protein 3 (501 aa).

12 consecutive transmembrane segments (helical) span residues 23–43 (LKLF…FGAL), 59–79 (IISF…TILY), 90–110 (YIFY…AYII), 146–166 (YALM…LMFW), 183–203 (PVLG…LVFF), 227–247 (IMLQ…MFLF), 293–313 (IALL…PWKA), 326–346 (VNFM…FMII), 361–381 (LLTP…IIFI), 383–403 (EIGT…VGAI), 446–466 (FGKS…PTAT), and 470–490 (IIIY…WNII).

It belongs to the ADP/ATP translocase tlc family.

The protein localises to the cell membrane. Functionally, provides the rickettsial cell with host ATP in exchange for rickettsial ADP. This is an obligate exchange system. This energy acquiring activity is an important component of rickettsial parasitism. The polypeptide is ADP,ATP carrier protein 3 (tlcC) (Rickettsia prowazekii (strain Madrid E)).